We begin with the raw amino-acid sequence, 492 residues long: N-succinylglutamate 5-semialdehyde dehydrogenase (492 aa).

220–225 (GSANTG) lines the NAD(+) pocket. Active-site residues include Glu243 and Cys277.

This sequence belongs to the aldehyde dehydrogenase family. AstD subfamily.

The enzyme catalyses N-succinyl-L-glutamate 5-semialdehyde + NAD(+) + H2O = N-succinyl-L-glutamate + NADH + 2 H(+). It functions in the pathway amino-acid degradation; L-arginine degradation via AST pathway; L-glutamate and succinate from L-arginine: step 4/5. Functionally, catalyzes the NAD-dependent reduction of succinylglutamate semialdehyde into succinylglutamate. In Shigella flexneri serotype 5b (strain 8401), this protein is N-succinylglutamate 5-semialdehyde dehydrogenase.